The following is a 190-amino-acid chain: MLLSDRDLRAEITAGRLGIEPFDDALVQPSSIDVRLDCMFRVFNNTRYTHIDPAKQQDELTSLVEPQDGEPFVLHPGEFVLGSTLELITLPDDLAGRLEGKSSLGRLGLLTHSTAGFIDPGFSGHITLELSNVANLPITLWPGMKIGQLCILRLTSPAEHPYGSTRVGSKYQGQRGPTPSRSYQNFITST.

DCTP contacts are provided by residues 101–106, Asp-119, 127–129, Gln-148, Tyr-162, and Gln-174; these read KSSLGR and TLE. Glu-129 (proton donor/acceptor) is an active-site residue. Residues 163–190 form a disordered region; that stretch reads GSTRVGSKYQGQRGPTPSRSYQNFITST. Polar residues predominate over residues 171-190; that stretch reads YQGQRGPTPSRSYQNFITST.

Belongs to the dCTP deaminase family. As to quaternary structure, homotrimer.

It catalyses the reaction dCTP + 2 H2O = dUMP + NH4(+) + diphosphate. It participates in pyrimidine metabolism; dUMP biosynthesis; dUMP from dCTP: step 1/1. Functionally, bifunctional enzyme that catalyzes both the deamination of dCTP to dUTP and the hydrolysis of dUTP to dUMP without releasing the toxic dUTP intermediate. The polypeptide is dCTP deaminase, dUMP-forming (Mycobacterium avium (strain 104)).